The chain runs to 574 residues: GRB2-associated-binding protein 4 (574 aa).

Positions 1 to 33 (MSLPSPSPSRELCPPDPAFAPLSSWPGSGPAGG) are disordered. A PH domain is found at 39–152 (HVLYSGWLRK…WVQSICQICG (114 aa)). 4 disordered regions span residues 176 to 200 (PAEPSCSHQHLPQEQEPTSEPPVSH), 215 to 234 (LRSHQHASQRAEHARSASFS), 293 to 331 (SLASHGHTRGSLTGSEADNEASSGKYTQHGGGNASRPAE), and 418 to 513 (PPVN…PRST). Over residues 181-193 (CSHQHLPQEQEPT) the composition is skewed to polar residues. 2 stretches are compositionally biased toward polar residues: residues 302–318 (GSLTGSEADNEASSGKY) and 424–442 (LKPNQKANPTPPNLRNNRV). Positions 457 to 478 (SGTSHTFDSSSSQHPISTQSIT) are enriched in low complexity. Over residues 502 to 513 (GGTSSSAPPRST) the composition is skewed to polar residues.

It belongs to the GAB family.

The chain is GRB2-associated-binding protein 4 (GAB4) from Homo sapiens (Human).